Here is a 513-residue protein sequence, read N- to C-terminus: Bone morphogenetic protein 6 (513 aa).

Positions 1–20 (MPGLGRRAQWLCWWWGLLCS) are cleaved as a signal peptide. Residues 21–374 (CCGPPPLRPP…VSEVHVRTTR (354 aa)) constitute a propeptide that is removed on maturation. Disordered regions lie at residues 38–66 (AAGGQLLGDGGSPGRTEQPPPSPQSSSGF), 89–131 (LPHR…RLKS), and 145–200 (ADND…ASPL). Positions 98 to 121 (GLQQPQPPALRQQEEQQQQQQLPR) are enriched in low complexity. Over residues 158–172 (QQSWPHEAASSSQRR) the composition is skewed to polar residues. Asparagine 241, asparagine 269, asparagine 386, asparagine 404, and asparagine 454 each carry an N-linked (GlcNAc...) asparagine glycan. Positions 373 to 398 (TRSASSRRRQQSRNRSTQSQDVARVS) are disordered. 3 disulfide bridges follow: cysteine 412–cysteine 478, cysteine 441–cysteine 510, and cysteine 445–cysteine 512.

The protein belongs to the TGF-beta family. As to quaternary structure, interacts with SOSTDC1. Interacts (when glycosylated) with type I receptor ACVR1; the interaction may induce HAMP expression. Interacts with type II receptor ACVR2B. Interacts with Hemojuvelin/HJV. Interacts with ERFE; the interaction inhibits BMP-induced transcription of HAMP. Interacts with BMPR1A/ALK3. Forms heterodimers with BMP2 in vitro; the heterodimer then binds to its receptor BMPR1A /ALK3 and may induce HAMP expression. In terms of processing, glycosylated at Asn-454. Glycosylation is crucial for recognition by the activin receptor type I/ACVR1.

The protein resides in the secreted. Its function is as follows. Growth factor of the TGF-beta superfamily that plays essential roles in many developmental processes including cartilage and bone formation. Also plays an important role in the regulation of HAMP/hepcidin expression and iron metabolism by acting as a ligand for hemojuvelin/HJV. Also acts to promote expression of HAMP, potentially via the interaction with its receptor BMPR1A/ALK3. Initiates the canonical BMP signaling cascade by associating with type I receptor ACVR1 and type II receptor ACVR2B. In turn, ACVR1 propagates signal by phosphorylating SMAD1/5/8 that travel to the nucleus and act as activators and repressors of transcription of target. Can also signal through non-canonical pathway such as TAZ-Hippo signaling cascade to modulate VEGF signaling by regulating VEGFR2 expression. The chain is Bone morphogenetic protein 6 (BMP6) from Homo sapiens (Human).